The primary structure comprises 88 residues: Large ribosomal subunit protein uL23c (88 aa).

The protein belongs to the universal ribosomal protein uL23 family. Part of the 50S ribosomal subunit.

It localises to the plastid. The protein localises to the chloroplast. Its function is as follows. Binds to 23S rRNA. The polypeptide is Large ribosomal subunit protein uL23c (rpl23) (Spirogyra maxima (Green alga)).